The following is a 1122-amino-acid chain: Receptor-type guanylate cyclase gcy-5 (1122 aa).

A signal peptide spans 1-19; sequence MRLLYFSMVLLWVLGASEC. The Extracellular segment spans residues 20–486; the sequence is QVIPSSRRTL…CPVQFWDQYG (467 aa). Residues Asn-252, Asn-299, Asn-344, Asn-350, Asn-378, Asn-434, and Asn-439 are each glycosylated (N-linked (GlcNAc...) asparagine). Residues 487–507 traverse the membrane as a helical segment; that stretch reads VLIFVASIVLIFLICIMLMCF. Residues 508–1122 are Cytoplasmic-facing; the sequence is GFMIRGRRAE…KSKMDTLKVV (615 aa). The segment at 536–562 is disordered; that stretch reads QKEKRKPNSRRSLQSGPSTITGESKMT. Positions 542 to 830 constitute a Protein kinase domain; it reads PNSRRSLQSG…NTNLMDHVFN (289 aa). Polar residues predominate over residues 545-559; the sequence is RRSLQSGPSTITGES. Positions 888-1018 constitute a Guanylate cyclase domain; the sequence is TVLFSDVVKF…DTVNTASRME (131 aa). Residues 1071–1122 form a disordered region; the sequence is SDTKSLSTRTTPPITDENWPPQMKEDLKKRAVTPYPERQRSGKSKMDTLKVV. The segment covering 1074–1083 has biased composition (polar residues); that stretch reads KSLSTRTTPP. Over residues 1107–1122 the composition is skewed to basic and acidic residues; that stretch reads ERQRSGKSKMDTLKVV.

Belongs to the adenylyl cyclase class-4/guanylyl cyclase family. As to expression, expressed in both ASEL and ASER neurons during early embryonic stages and becomes specifically expressed in ASER neuron in early larval stage.

It localises to the cell membrane. The catalysed reaction is GTP = 3',5'-cyclic GMP + diphosphate. In terms of biological role, guanylate cyclase involved in the production of the second messenger cGMP. Unlike other guanylate cyclases expressed in ASE neurons, may not play a role in chemotaxis responses to salt ions mediated by ASE sensory neurons. The protein is Receptor-type guanylate cyclase gcy-5 of Caenorhabditis elegans.